The sequence spans 323 residues: Aldo-keto reductase family 1 member C3 (323 aa).

NADP(+)-binding positions include 23–24 (TY) and Asp50. Tyr55 serves as the catalytic Proton donor. Substrate is bound at residue His117. NADP(+) contacts are provided by residues 166 to 167 (SN), Gln190, 216 to 222 (YSALGSQ), 270 to 272 (KSY), and 276 to 280 (RIRQN).

The protein belongs to the aldo/keto reductase family. Expressed in many tissues including adrenal gland, brain, kidney, liver, lung, mammary gland, placenta, small intestine, colon, spleen, prostate and testis. High expression in prostate and mammary gland. In the prostate, higher levels in epithelial cells than in stromal cells. In the brain, expressed in medulla, spinal cord, frontotemporal lobes, thalamus, subthalamic nuclei and amygdala. Weaker expression in the hippocampus, substantia nigra and caudate.

The protein resides in the cytoplasm. The enzyme catalyses a 3alpha-hydroxysteroid + NADP(+) = a 3-oxosteroid + NADPH + H(+). The catalysed reaction is a 3alpha-hydroxysteroid + NAD(+) = a 3-oxosteroid + NADH + H(+). It carries out the reaction prostaglandin F2alpha + NADP(+) = prostaglandin D2 + NADPH + H(+). It catalyses the reaction prostaglandin F2alpha + NADP(+) = prostaglandin H2 + NADPH + H(+). The enzyme catalyses prostaglandin D2 + NADPH + H(+) = 11beta-prostaglandin F2 + NADP(+). The catalysed reaction is prostaglandin D2-ethanolamide + NADPH + H(+) = 11beta-prostaglandin F2-ethanolamide + NADP(+). It carries out the reaction testosterone + NAD(+) = androst-4-ene-3,17-dione + NADH + H(+). It catalyses the reaction testosterone + NADP(+) = androst-4-ene-3,17-dione + NADPH + H(+). The enzyme catalyses 17beta-estradiol + NADP(+) = estrone + NADPH + H(+). The catalysed reaction is 17beta-estradiol + NAD(+) = estrone + NADH + H(+). It carries out the reaction (20S)-hydroxypregn-4-en-3-one + NADP(+) = progesterone + NADPH + H(+). It catalyses the reaction (20S)-hydroxypregn-4-en-3-one + NAD(+) = progesterone + NADH + H(+). The enzyme catalyses 5alpha-androstane-3alpha,17beta-diol + NADP(+) = 17beta-hydroxy-5alpha-androstan-3-one + NADPH + H(+). The catalysed reaction is 5alpha-androstane-3alpha,17beta-diol + NAD(+) = 17beta-hydroxy-5alpha-androstan-3-one + NADH + H(+). It carries out the reaction androsterone + NADPH + H(+) = 5alpha-androstane-3alpha,17beta-diol + NADP(+). It catalyses the reaction 5alpha-androstane-3alpha,17beta-diol + NAD(+) = androsterone + NADH + H(+). The enzyme catalyses 5alpha-androstane-3beta,17beta-diol + NADP(+) = 17beta-hydroxy-5alpha-androstan-3-one + NADPH + H(+). The catalysed reaction is 9-cis-retinol + NADP(+) = 9-cis-retinal + NADPH + H(+). The protein operates within steroid metabolism. With respect to regulation, strongly inhibited by nonsteroidal anti-inflammatory drugs (NSAID) including flufenamic acid and indomethacin. Also inhibited by the flavinoid, rutin, and by selective serotonin inhibitors (SSRIs). The oxidation reaction is inhibited by low micromolar concentrations of NADPH. Its function is as follows. Cytosolic aldo-keto reductase that catalyzes the NADH and NADPH-dependent reduction of ketosteroids to hydroxysteroids. Acts as a NAD(P)(H)-dependent 3-, 17- and 20-ketosteroid reductase on the steroid nucleus and side chain and regulates the metabolism of androgens, estrogens and progesterone. Displays the ability to catalyze both oxidation and reduction in vitro, but most probably acts as a reductase in vivo since the oxidase activity measured in vitro is inhibited by physiological concentration of NADPH. Acts preferentially as a 17-ketosteroid reductase and has the highest catalytic efficiency of the AKR1C enzyme for the reduction of delta4-androstenedione to form testosterone. Reduces prostaglandin (PG) D2 to 11beta-prostaglandin F2, progesterone to 20alpha-hydroxyprogesterone and estrone to 17beta-estradiol. Catalyzes the transformation of the potent androgen dihydrotestosterone (DHT) into the less active form, 5-alpha-androstan-3-alpha,17-beta-diol (3-alpha-diol). Also displays retinaldehyde reductase activity toward 9-cis-retinal. The protein is Aldo-keto reductase family 1 member C3 (AKR1C3) of Homo sapiens (Human).